Consider the following 264-residue polypeptide: Thiazole synthase (264 aa).

Lys-106 functions as the Schiff-base intermediate with DXP in the catalytic mechanism. Residues Gly-167, 193-194, and 215-216 contribute to the 1-deoxy-D-xylulose 5-phosphate site; these read AG and NS.

Belongs to the ThiG family. In terms of assembly, homotetramer. Forms heterodimers with either ThiH or ThiS.

The protein resides in the cytoplasm. The enzyme catalyses [ThiS sulfur-carrier protein]-C-terminal-Gly-aminoethanethioate + 2-iminoacetate + 1-deoxy-D-xylulose 5-phosphate = [ThiS sulfur-carrier protein]-C-terminal Gly-Gly + 2-[(2R,5Z)-2-carboxy-4-methylthiazol-5(2H)-ylidene]ethyl phosphate + 2 H2O + H(+). The protein operates within cofactor biosynthesis; thiamine diphosphate biosynthesis. Functionally, catalyzes the rearrangement of 1-deoxy-D-xylulose 5-phosphate (DXP) to produce the thiazole phosphate moiety of thiamine. Sulfur is provided by the thiocarboxylate moiety of the carrier protein ThiS. In vitro, sulfur can be provided by H(2)S. The protein is Thiazole synthase of Stutzerimonas stutzeri (strain A1501) (Pseudomonas stutzeri).